The sequence spans 374 residues: DNA replication and repair protein RecF (374 aa).

34-41 (GNNGSGKT) provides a ligand contact to ATP.

Belongs to the RecF family.

Its subcellular location is the cytoplasm. In terms of biological role, the RecF protein is involved in DNA metabolism; it is required for DNA replication and normal SOS inducibility. RecF binds preferentially to single-stranded, linear DNA. It also seems to bind ATP. The sequence is that of DNA replication and repair protein RecF from Allorhizobium ampelinum (strain ATCC BAA-846 / DSM 112012 / S4) (Agrobacterium vitis (strain S4)).